The primary structure comprises 519 residues: MQKNSILFVTLSAFTVFIWYFFFAQPSEQSYRQMMQLQNTVAVSESGVNKFKNADLNEFQIDDIYAKEEHINIETEQYKAVLTNKGGGVLSWSVKEKNGQWVDLVFPESAPVMANFPNLTYKVVSKSAEKIVFEYASKEGWKITKIYNLSDLYMHNLNISVEKNAKTPFPQIDLKWGPGLGTDSKELKENISLTRALVYTAVKPNKLKKLKDNFEPASLCKWTAVDNRYFLVAFIPKNSMDFDKILFSRLEKKHPCSVILKAAEPKDVDKKDYSVNFYLGPKDYKYLKTYDLGLEKTVDFGFFGFLGKIAFSILVFFYKLTHNYGWAIIMLTTIIQILVLPLTLKSFKSSAAMKRVQPVIKDIQTKYKDNPQRLKAEMLNIYQSQKVNPLGGCLPMLLQLPIFWAFFTMLRNAYELRNEGWILWVKDLSAADQFMQFGSFNLNLLPLMMGIGMFFQQRMTTVTSDPTQRKIMYIMPVIFTFMFWSFPSGLVLYWLTNSLISMIEQYFIMKKDAITVKHI.

The next 6 helical transmembrane spans lie at 6-26, 298-318, 324-344, 390-410, 434-454, and 471-491; these read ILFVTLSAFTVFIWYFFFAQP, VDFGFFGFLGKIAFSILVFFY, YGWAIIMLTTIIQILVLPLTL, LGGCLPMLLQLPIFWAFFTML, FMQFGSFNLNLLPLMMGIGMF, and IMYIMPVIFTFMFWSFPSGLV.

The protein belongs to the OXA1/ALB3/YidC family. Type 1 subfamily. In terms of assembly, interacts with the Sec translocase complex via SecD. Specifically interacts with transmembrane segments of nascent integral membrane proteins during membrane integration.

The protein resides in the cell inner membrane. Functionally, required for the insertion and/or proper folding and/or complex formation of integral membrane proteins into the membrane. Involved in integration of membrane proteins that insert both dependently and independently of the Sec translocase complex, as well as at least some lipoproteins. Aids folding of multispanning membrane proteins. This is Membrane protein insertase YidC from Endomicrobium trichonymphae.